Consider the following 74-residue polypeptide: Somatostatin-2 (74 aa).

Residues 1-46 (ARGAGLLSQDWSAVEDLLAQMSLPEADAQREAEVVSVATGGRLNLE) constitute a propeptide that is removed on maturation. A disulfide bridge links cysteine 63 with cysteine 74.

Belongs to the somatostatin family.

Its subcellular location is the secreted. Its function is as follows. Somatostatin inhibits the release of somatotropin. In Myoxocephalus scorpius (Shorthorn sculpin), this protein is Somatostatin-2 (sst2).